The chain runs to 68 residues: MKKGIHPELKKAKIVCACGAVYETLSTKEYMTVEICSKCHPFFTGQRKFVDTEGRVERFTKKYNWEIK.

The Zn(2+) site is built by Cys-16, Cys-18, Cys-36, and Cys-39.

The protein belongs to the bacterial ribosomal protein bL31 family. Type A subfamily. In terms of assembly, part of the 50S ribosomal subunit. Requires Zn(2+) as cofactor.

Its function is as follows. Binds the 23S rRNA. In Dictyoglomus turgidum (strain DSM 6724 / Z-1310), this protein is Large ribosomal subunit protein bL31.